A 39-amino-acid polypeptide reads, in one-letter code: Antimicrobial peptide CHP1 (39 aa).

Intrachain disulfides connect C6-C28, C13-C34, and C18-C35.

Its function is as follows. Bactericidal activity; inhibits S.aureus and E.coli. This Gallus gallus (Chicken) protein is Antimicrobial peptide CHP1.